A 135-amino-acid polypeptide reads, in one-letter code: uncharacterized protein (135 aa).

Residues 8–123 (PKGKMVLRTL…IFVYVAVDEF (116 aa)) form the HotDog ACOT-type domain.

Belongs to the acyl coenzyme A hydrolase family.

This is an uncharacterized protein from Buchnera aphidicola subsp. Baizongia pistaciae (strain Bp).